Reading from the N-terminus, the 177-residue chain is N5-carboxyaminoimidazole ribonucleotide mutase (177 aa).

Positions 18, 21, and 48 each coordinate substrate.

The protein belongs to the AIR carboxylase family. Class I subfamily.

It carries out the reaction 5-carboxyamino-1-(5-phospho-D-ribosyl)imidazole + H(+) = 5-amino-1-(5-phospho-D-ribosyl)imidazole-4-carboxylate. It participates in purine metabolism; IMP biosynthesis via de novo pathway; 5-amino-1-(5-phospho-D-ribosyl)imidazole-4-carboxylate from 5-amino-1-(5-phospho-D-ribosyl)imidazole (N5-CAIR route): step 2/2. Its function is as follows. Catalyzes the conversion of N5-carboxyaminoimidazole ribonucleotide (N5-CAIR) to 4-carboxy-5-aminoimidazole ribonucleotide (CAIR). This chain is N5-carboxyaminoimidazole ribonucleotide mutase, found in Pyrococcus horikoshii (strain ATCC 700860 / DSM 12428 / JCM 9974 / NBRC 100139 / OT-3).